The chain runs to 251 residues: tRNA (guanine-N(1)-)-methyltransferase (251 aa).

S-adenosyl-L-methionine contacts are provided by residues G117 and I137–L142.

The protein belongs to the RNA methyltransferase TrmD family. In terms of assembly, homodimer.

It is found in the cytoplasm. The enzyme catalyses guanosine(37) in tRNA + S-adenosyl-L-methionine = N(1)-methylguanosine(37) in tRNA + S-adenosyl-L-homocysteine + H(+). Specifically methylates guanosine-37 in various tRNAs. The polypeptide is tRNA (guanine-N(1)-)-methyltransferase (Haemophilus ducreyi (strain 35000HP / ATCC 700724)).